An 885-amino-acid polypeptide reads, in one-letter code: DDT domain-containing protein DDB_G0282237 (885 aa).

Positions 20–125 constitute a WAC domain; the sequence is EEYFVIKFTK…GEIVSFKKAN (106 aa). Disordered stretches follow at residues 141 to 184, 201 to 264, and 367 to 431; these read ESDE…INAL, DDEN…SVRK, and LEDT…KENE. The span at 154-180 shows a compositional bias: low complexity; sequence SSSSSSTTTTTTTPTTPPTTTTTTSSS. Residues 210-264 are compositionally biased toward basic and acidic residues; the sequence is KNNGDTSSDKKGEKEKEKEKEKEKEKEKEKEKEKEKEKEKEKEKEKDSDTKSVRK. The stretch at 217 to 260 forms a coiled coil; it reads SDKKGEKEKEKEKEKEKEKEKEKEKEKEKEKEKEKEKEKDSDTK. The segment covering 367–379 has biased composition (acidic residues); the sequence is LEDTEEESVDIES. Residues 380 to 396 show a composition bias toward low complexity; that stretch reads NDNSNSNGNSNSNNNLD. Residues 443–503 enclose the DDT domain; sequence SNTFGDFLMV…MKTIFTLPSY (61 aa). A coiled-coil region spans residues 530–565; that stretch reads FQNEVKRIAIEEKEKQEKLKQLEEQNIRMLNLANEL. 2 disordered regions span residues 562 to 632 and 707 to 744; these read ANEL…WKEE and KQDD…QKKP. Acidic residues predominate over residues 567-577; that stretch reads GSDDEDDEMKL. Over residues 578–603 the composition is skewed to basic and acidic residues; that stretch reads DEDGNEIKKDVEMKDNDGTKDTKKDD. 2 coiled-coil regions span residues 593–628 and 674–782; these read NDGT…GEEE and ASEK…RDRN. Composition is skewed to acidic residues over residues 604–631 and 715–729; these read EENE…EWKE and AEDD…EEQQ.

Its subcellular location is the nucleus. The chain is DDT domain-containing protein DDB_G0282237 from Dictyostelium discoideum (Social amoeba).